A 254-amino-acid chain; its full sequence is NAD-dependent glycerol dehydrogenase (254 aa).

NAD(+) is bound at residue 18-47 (VVTGAASGIGKAMAELFSEKGAYVVLLDIK). Residue tyrosine 160 is the Proton acceptor of the active site. Position 164 (lysine 164) interacts with NAD(+).

It belongs to the short-chain dehydrogenases/reductases (SDR) family. Mg(2+) is required as a cofactor. Requires Mn(2+) as cofactor.

It is found in the cytoplasm. It catalyses the reaction glycerol + NAD(+) = dihydroxyacetone + NADH + H(+). Its activity is regulated as follows. Inhibited by Zn(2+). Involved in the glycerol metabolism. Catalyzes the NAD-dependent oxidation of glycerol to dihydroxyacetone (glycerone). GolD specifically uses NAD. In Listeria innocua serovar 6a (strain ATCC BAA-680 / CLIP 11262), this protein is NAD-dependent glycerol dehydrogenase.